The chain runs to 677 residues: Methionine--tRNA ligase (677 aa).

Residues 15 to 25 (PYANGSIHLGH) carry the 'HIGH' region motif. Cysteine 146, cysteine 149, cysteine 159, and cysteine 162 together coordinate Zn(2+). Positions 333 to 337 (KMSKS) match the 'KMSKS' region motif. Lysine 336 lines the ATP pocket. The tRNA-binding domain maps to 575-677 (DFAKVDLRVA…AGAKPGHQVK (103 aa)).

This sequence belongs to the class-I aminoacyl-tRNA synthetase family. MetG type 1 subfamily. Homodimer. It depends on Zn(2+) as a cofactor.

Its subcellular location is the cytoplasm. The enzyme catalyses tRNA(Met) + L-methionine + ATP = L-methionyl-tRNA(Met) + AMP + diphosphate. Is required not only for elongation of protein synthesis but also for the initiation of all mRNA translation through initiator tRNA(fMet) aminoacylation. The sequence is that of Methionine--tRNA ligase from Shigella dysenteriae serotype 1 (strain Sd197).